A 278-amino-acid polypeptide reads, in one-letter code: Dermonecrotic toxin LspiSicTox-betaIE2ii (278 aa).

His5 is a catalytic residue. Mg(2+) is bound by residues Glu25 and Asp27. The active-site Nucleophile is the His41. Cystine bridges form between Cys45/Cys51 and Cys47/Cys190. Asp85 is a binding site for Mg(2+).

The protein belongs to the arthropod phospholipase D family. Class II subfamily. Mg(2+) is required as a cofactor. In terms of tissue distribution, expressed by the venom gland.

It localises to the secreted. It catalyses the reaction an N-(acyl)-sphingosylphosphocholine = an N-(acyl)-sphingosyl-1,3-cyclic phosphate + choline. The enzyme catalyses an N-(acyl)-sphingosylphosphoethanolamine = an N-(acyl)-sphingosyl-1,3-cyclic phosphate + ethanolamine. It carries out the reaction a 1-acyl-sn-glycero-3-phosphocholine = a 1-acyl-sn-glycero-2,3-cyclic phosphate + choline. The catalysed reaction is a 1-acyl-sn-glycero-3-phosphoethanolamine = a 1-acyl-sn-glycero-2,3-cyclic phosphate + ethanolamine. Its function is as follows. Dermonecrotic toxins cleave the phosphodiester linkage between the phosphate and headgroup of certain phospholipids (sphingolipid and lysolipid substrates), forming an alcohol (often choline) and a cyclic phosphate. This toxin acts on sphingomyelin (SM). It may also act on ceramide phosphoethanolamine (CPE), lysophosphatidylcholine (LPC) and lysophosphatidylethanolamine (LPE), but not on lysophosphatidylserine (LPS), and lysophosphatidylglycerol (LPG). It acts by transphosphatidylation, releasing exclusively cyclic phosphate products as second products. Induces dermonecrosis, hemolysis, increased vascular permeability, edema, inflammatory response, and platelet aggregation. In Loxosceles spinulosa (Recluse spider), this protein is Dermonecrotic toxin LspiSicTox-betaIE2ii.